The chain runs to 443 residues: Glutamyl-tRNA reductase (443 aa).

Residues 49–52 (TCNR), S109, 114–116 (ETQ), and Q120 each bind substrate. C50 acts as the Nucleophile in catalysis. 189–194 (GAGKMG) serves as a coordination point for NADP(+).

The protein belongs to the glutamyl-tRNA reductase family. Homodimer.

It catalyses the reaction (S)-4-amino-5-oxopentanoate + tRNA(Glu) + NADP(+) = L-glutamyl-tRNA(Glu) + NADPH + H(+). It participates in porphyrin-containing compound metabolism; protoporphyrin-IX biosynthesis; 5-aminolevulinate from L-glutamyl-tRNA(Glu): step 1/2. Its function is as follows. Catalyzes the NADPH-dependent reduction of glutamyl-tRNA(Glu) to glutamate 1-semialdehyde (GSA). The chain is Glutamyl-tRNA reductase from Bacillus mycoides (strain KBAB4) (Bacillus weihenstephanensis).